Reading from the N-terminus, the 365-residue chain is Phosphate acyltransferase (365 aa).

This sequence belongs to the PlsX family. In terms of assembly, homodimer. Probably interacts with PlsY.

The protein resides in the cytoplasm. It carries out the reaction a fatty acyl-[ACP] + phosphate = an acyl phosphate + holo-[ACP]. The protein operates within lipid metabolism; phospholipid metabolism. In terms of biological role, catalyzes the reversible formation of acyl-phosphate (acyl-PO(4)) from acyl-[acyl-carrier-protein] (acyl-ACP). This enzyme utilizes acyl-ACP as fatty acyl donor, but not acyl-CoA. In Klebsiella pneumoniae subsp. pneumoniae (strain ATCC 700721 / MGH 78578), this protein is Phosphate acyltransferase.